A 508-amino-acid chain; its full sequence is DNA-directed RNA polymerase subunit alpha (508 aa).

Residues 1-380 form an alpha N-terminal domain (alpha-NTD) region; sequence MKHILLSCVE…HLFSPFLQTH (380 aa). The tract at residues 434–508 is alpha C-terminal domain (alpha-CTD); that stretch reads NLVTAIQTLD…LKNFGVLPTS (75 aa).

Belongs to the RNA polymerase alpha chain family. In plastids the minimal PEP RNA polymerase catalytic core is composed of four subunits: alpha, beta, beta', and beta''. When a (nuclear-encoded) sigma factor is associated with the core the holoenzyme is formed, which can initiate transcription.

The protein resides in the plastid. The protein localises to the chloroplast. The enzyme catalyses RNA(n) + a ribonucleoside 5'-triphosphate = RNA(n+1) + diphosphate. DNA-dependent RNA polymerase catalyzes the transcription of DNA into RNA using the four ribonucleoside triphosphates as substrates. This Oltmannsiellopsis viridis (Marine flagellate) protein is DNA-directed RNA polymerase subunit alpha (rpoA).